A 135-amino-acid chain; its full sequence is UPF0299 membrane protein YPK_2559 (135 aa).

3 consecutive transmembrane segments (helical) span residues 30–50, 66–86, and 93–113; these read LLLP…FVLL, LLIR…MQYY, and FGPI…VVAY.

Belongs to the UPF0299 family.

It is found in the cell inner membrane. This is UPF0299 membrane protein YPK_2559 from Yersinia pseudotuberculosis serotype O:3 (strain YPIII).